The primary structure comprises 117 residues: Small ribosomal subunit protein bS18c (117 aa).

The segment at 86–117 (SELTPRTNALKARNKNKQNKYQNNQTKFLSNF) is disordered.

This sequence belongs to the bacterial ribosomal protein bS18 family. Part of the 30S ribosomal subunit.

The protein localises to the plastid. The protein is Small ribosomal subunit protein bS18c of Cuscuta exaltata (Tall dodder).